A 288-amino-acid polypeptide reads, in one-letter code: Ras-like protein 1 (288 aa).

11–18 (GGGGVGKS) contributes to the GTP binding site. The Effector region signature appears at 33–41 (YDPTIEDSY). GTP is bound by residues 58-62 (DTAGQ) and 117-120 (NKCD). The segment at 176 to 288 (EKQQQQQQQQ…KSKNGCCVIV (113 aa)) is disordered. 2 stretches are compositionally biased toward low complexity: residues 178-216 (QQQQQQQQQNANQQGQDQYGQQKDNQQSQFNNQINNNNN) and 246-281 (PNQSQSQRQQQQQQQEPQQQSENQFSGQKQSSSKSK). Cys284 carries S-palmitoyl cysteine lipidation. Cys285 bears the Cysteine methyl ester mark. Cys285 is lipidated: S-farnesyl cysteine. The propeptide at 286 to 288 (VIV) is removed in mature form.

Belongs to the small GTPase superfamily. Ras family.

It is found in the cell membrane. It carries out the reaction GTP + H2O = GDP + phosphate + H(+). Its activity is regulated as follows. Alternates between an inactive form bound to GDP and an active form bound to GTP. Activated by a guanine nucleotide-exchange factor (GEF) and inactivated by a GTPase-activating protein (GAP). Its function is as follows. Required for the regulation of both a MAP kinase signaling pathway and a cAMP signaling pathway. The activation of these pathways contributes to the pathogenicity of the cells through the induction of the morphological transition from the yeast to the polarized filamentous form. The polypeptide is Ras-like protein 1 (RAS1) (Candida albicans (strain WO-1) (Yeast)).